The primary structure comprises 105 residues: Extracellular guanyl-specific ribonuclease Fl1 (105 aa).

Cystine bridges form between Cys5–Cys101 and Cys23–Cys82. His39 is a catalytic residue. The Proton acceptor role is filled by Glu57. Residue His90 is the Proton donor of the active site.

It belongs to the ribonuclease N1/T1 family.

The catalysed reaction is [RNA] containing guanosine + H2O = an [RNA fragment]-3'-guanosine-3'-phosphate + a 5'-hydroxy-ribonucleotide-3'-[RNA fragment].. In Gibberella baccata (Fusarium lateritium), this protein is Extracellular guanyl-specific ribonuclease Fl1.